The sequence spans 106 residues: SH3 domain-binding glutamic acid-rich-like protein 2-B (106 aa).

Positions 61 to 67 match the SH3-binding motif; it reads QGNPLPP.

The protein belongs to the SH3BGR family.

It localises to the nucleus. The polypeptide is SH3 domain-binding glutamic acid-rich-like protein 2-B (sh3bgrl2-b) (Xenopus laevis (African clawed frog)).